Consider the following 354-residue polypeptide: Probable disease resistance protein At5g45490 (354 aa).

Residues 33–53 (AKGNLEKKRDDNEEEERLKTE) are a coiled coil. Residues 45–122 (EEEERLKTES…VYAPRVWVSM (78 aa)) form the NB-ARC domain. 91–98 (GEYGVGKT) is an ATP binding site. Residues 328–354 (DDEVGPVGSTHGQTDSSNRQPANQASS) form a disordered region. Over residues 337–354 (THGQTDSSNRQPANQASS) the composition is skewed to polar residues.

Its function is as follows. Possible disease resistance protein. In Arabidopsis thaliana (Mouse-ear cress), this protein is Probable disease resistance protein At5g45490.